The sequence spans 153 residues: Peptidyl-prolyl cis-trans isomerase FKBP15-1 (153 aa).

Positions M1 to A25 are cleaved as a signal peptide. Residues G52–N140 form the PPIase FKBP-type domain. The short motif at K150–L153 is the Prevents secretion from ER element.

It belongs to the FKBP-type PPIase family.

The protein resides in the endoplasmic reticulum lumen. The catalysed reaction is [protein]-peptidylproline (omega=180) = [protein]-peptidylproline (omega=0). In terms of biological role, PPIases accelerate the folding of proteins. It catalyzes the cis-trans isomerization of proline imidic peptide bonds in oligopeptides. The chain is Peptidyl-prolyl cis-trans isomerase FKBP15-1 (FKBP15-1) from Arabidopsis thaliana (Mouse-ear cress).